Consider the following 217-residue polypeptide: Adenylate kinase (217 aa).

10-15 (GAGKGT) contributes to the ATP binding site. Residues 30 to 59 (STGDIFRANIKNNTELGAKAKEYMDQGLLV) form an NMP region. Residues T31, R36, 57–59 (LLV), 85–88 (GFPR), and Q92 contribute to the AMP site. An LID region spans residues 126-163 (GRRACVSCGGTYHVVFTPTKKEGICDACGGELTIRDDD). An ATP-binding site is contributed by R127. 2 residues coordinate Zn(2+): C130 and C133. Position 136–137 (136–137 (TY)) interacts with ATP. Residues C150 and C153 each coordinate Zn(2+). AMP-binding residues include R160 and R171. K199 is a binding site for ATP.

It belongs to the adenylate kinase family. As to quaternary structure, monomer.

The protein localises to the cytoplasm. It carries out the reaction AMP + ATP = 2 ADP. It functions in the pathway purine metabolism; AMP biosynthesis via salvage pathway; AMP from ADP: step 1/1. Functionally, catalyzes the reversible transfer of the terminal phosphate group between ATP and AMP. Plays an important role in cellular energy homeostasis and in adenine nucleotide metabolism. The chain is Adenylate kinase from Lachnoclostridium phytofermentans (strain ATCC 700394 / DSM 18823 / ISDg) (Clostridium phytofermentans).